A 284-amino-acid chain; its full sequence is Putative ABC transporter ATP-binding protein PH1815 (284 aa).

Positions isoleucine 4 to lysine 244 constitute an ABC transporter domain. Glycine 38 to serine 45 provides a ligand contact to ATP.

It belongs to the ABC transporter superfamily.

It localises to the cell membrane. Its function is as follows. Probably part of an ABC transporter complex. Responsible for energy coupling to the transport system. In Pyrococcus horikoshii (strain ATCC 700860 / DSM 12428 / JCM 9974 / NBRC 100139 / OT-3), this protein is Putative ABC transporter ATP-binding protein PH1815.